Reading from the N-terminus, the 128-residue chain is uncharacterized protein (128 aa).

Transmembrane regions (helical) follow at residues 30–50 (ILFTILSVAIIMVAFDSLGSS), 65–85 (VFRGNTAKGIAVVGIIVLGIQ), and 93–113 (WEVALVVVTAIIILFKAPDIV).

It localises to the cell membrane. This is an uncharacterized protein from Rickettsia prowazekii (strain Madrid E).